The sequence spans 357 residues: MGIMEAERKTTGWAARDPSGILSPYTYTLRETGPEDVNIRIICCGICHTDLHQTKNDLGMSNYPMVPGHEVVGEVVEVGSDVSKFTVGDIVGVGCLVGCCGGCSPCERDLEQYCPKKIWSYNDVYINGQPTQGGFAKATVVHQKFVVKIPEGMAVEQAAPLLCAGVTVYSPLSHFGLKQPGLRGGILGLGGVGHMGVKIAKAMGHHVTVISSSNKKREEALQDLGADDYVIGSDQAKMSELADSLDYVIDTVPVHHALEPYLSLLKLDGKLILMGVINNPLQFLTPLLMLGRKVITGSFIGSMKETEEMLEFCKEKGLSSIIEVVKMDYVNTAFERLEKNDVRYRFVVDVEGSNLDA.

A Zn(2+)-binding site is contributed by cysteine 47. Position 49 (threonine 49) interacts with NADP(+). Zn(2+) contacts are provided by histidine 69, glutamate 70, cysteine 100, cysteine 103, cysteine 106, cysteine 114, and cysteine 163. Residues threonine 167, 188-193, 211-216, threonine 251, glycine 275, and 298-300 contribute to the NADP(+) site; these read GLGGVG, SSSNKK, and SFI.

This sequence belongs to the zinc-containing alcohol dehydrogenase family. As to quaternary structure, homodimer. Requires Zn(2+) as cofactor. Expressed at the lateral root initiation sites, in the vascular tissues of the primary lateral root and the root caps. Expressed in the hypocotyl, cotyledon and leaf veins, apical meristem region, at the base of the trichomes, hydathodes and cauline leaves. In stems, expressed in the cells associated with the vascular cambium, interfascicular cambium and the developing xylem. Expressed in the vascular strand of petals and sepals, anthers, stamen filaments, stigma in flowers, and abscission, style and stigmatic regions of siliques.

It catalyses the reaction (E)-cinnamyl alcohol + NADP(+) = (E)-cinnamaldehyde + NADPH + H(+). The catalysed reaction is (E)-coniferol + NADP(+) = (E)-coniferaldehyde + NADPH + H(+). It carries out the reaction (E)-sinapyl alcohol + NADP(+) = (E)-sinapaldehyde + NADPH + H(+). The enzyme catalyses (E)-4-coumaroyl alcohol + NADP(+) = (E)-4-coumaraldehyde + NADPH + H(+). It catalyses the reaction (E)-caffeyl alcohol + NADP(+) = (E)-caffeyl aldehyde + NADPH + H(+). It participates in aromatic compound metabolism; phenylpropanoid biosynthesis. Functionally, involved in lignin biosynthesis in the floral stem. Catalyzes the final step specific for the production of lignin monomers. Catalyzes the NADPH-dependent reduction of coniferaldehyde, 5-hydroxyconiferaldehyde, sinapaldehyde, 4-coumaraldehyde and caffeyl aldehyde to their respective alcohols. In Arabidopsis thaliana (Mouse-ear cress), this protein is Cinnamyl alcohol dehydrogenase 5.